The following is a 290-amino-acid chain: tRNA (adenine(58)-N(1))-methyltransferase catalytic subunit TRMT61A (290 aa).

Residue serine 2 is modified to N-acetylserine. 5 substrate regions span residues leucine 20–histidine 22, glutamine 35–valine 42, glycine 64–tryptophan 65, glutamine 85–serine 89, and serine 110–valine 117. S-adenosyl-L-methionine is bound by residues leucine 87, serine 114 to serine 116, glutamate 135, arginine 140, aspartate 163 to valine 164, and aspartate 181. Substrate regions lie at residues leucine 180 to proline 183 and serine 205 to glutamine 212. Threonine 279 provides a ligand contact to substrate.

This sequence belongs to the class I-like SAM-binding methyltransferase superfamily. TRM61 family. In terms of assembly, heterotetramer; composed of two copies of TRMT6 and two copies of TRMT61A.

Its subcellular location is the nucleus. The enzyme catalyses adenosine(58) in tRNA + S-adenosyl-L-methionine = N(1)-methyladenosine(58) in tRNA + S-adenosyl-L-homocysteine + H(+). It catalyses the reaction an adenosine in mRNA + S-adenosyl-L-methionine = an N(1)-methyladenosine in mRNA + S-adenosyl-L-homocysteine + H(+). In terms of biological role, catalytic subunit of tRNA (adenine-N(1)-)-methyltransferase, which catalyzes the formation of N(1)-methyladenine at position 58 (m1A58) in initiator methionyl-tRNA. Catalytic subunit of mRNA N(1)-methyltransferase complex, which mediates methylation of adenosine residues at the N(1) position of a small subset of mRNAs: N(1) methylation takes place in tRNA T-loop-like structures of mRNAs and is only present at low stoichiometries. This is tRNA (adenine(58)-N(1))-methyltransferase catalytic subunit TRMT61A (Trmt61a) from Rattus norvegicus (Rat).